A 1037-amino-acid polypeptide reads, in one-letter code: Nucleoporin NUP120 (1037 aa).

Leucine-zipper regions lie at residues 131–152 and 290–311; these read LQLP…WFHL and LLPL…SGIL. Thr417 carries the phosphothreonine modification.

As to quaternary structure, component of the nuclear pore complex (NPC). NPC constitutes the exclusive means of nucleocytoplasmic transport. NPCs allow the passive diffusion of ions and small molecules and the active, nuclear transport receptor-mediated bidirectional transport of macromolecules such as proteins, RNAs, ribonucleoparticles (RNPs), and ribosomal subunits across the nuclear envelope. Due to its 8-fold rotational symmetry, all subunits are present with 8 copies or multiples thereof. NUP120 is part of the heptameric 0.5 MDa autoassembling NUP84 NPC subcomplex (NUP84, NUP85, NUP120, NUP133, NUP145C, SEC13 and SEH1).

The protein localises to the nucleus. Its subcellular location is the nuclear pore complex. It is found in the nucleus membrane. Functions as a component of the nuclear pore complex (NPC). NPC components, collectively referred to as nucleoporins (NUPs), can play the role of both NPC structural components and of docking or interaction partners for transiently associated nuclear transport factors. NUP120 is involved in nuclear poly(A)+ RNA and pre-ribosome export, in GSP1 nuclear import, in NPC assembly and distribution, as well as in nuclear envelope organization. This chain is Nucleoporin NUP120 (NUP120), found in Saccharomyces cerevisiae (strain ATCC 204508 / S288c) (Baker's yeast).